Reading from the N-terminus, the 203-residue chain is MNKQSHYSIKSNFLSKSEKKISIDHYDEADGPSLSSSSSVISKNDLSREKIINRIKNLIDNKFSYNKNIKICTIIKNKCMIIQTIKDMLFSTNLYFIIKIKKSFGLFNSVYVKFFDKDIFENSALNLYNNAYELAKKNSTDIVLEKNILLKNELIAECKTRNYNMALDMYSHKFVYDTYCRKVFVVDDNVVLKKYKIYAHIVD.

It belongs to the mimivirus L332/L333/L334 family.

This is an uncharacterized protein from Acanthamoeba polyphaga mimivirus (APMV).